A 919-amino-acid polypeptide reads, in one-letter code: Protein phosphatase 1 regulatory subunit 37 (919 aa).

LRR repeat units lie at residues 340–361, 368–388, 396–417, 425–445, 454–474, and 482–502; these read SLQY…FVAR, SLTV…MLLA, NLRE…AQLG, NIQI…AYVC, GLVT…GYLA, and SLET…HKLK. 2 disordered regions span residues 626–716 and 790–866; these read ATED…TIPS and APSQ…APLP. Residues 631 to 640 are compositionally biased toward acidic residues; it reads THEEEEEEEA. Residues 641–658 are compositionally biased toward basic and acidic residues; sequence SPLKKIEEETTDALKDAT. The segment covering 677–690 has biased composition (acidic residues); sequence PQDDSDSDTEDEET. Residues 691–701 are compositionally biased toward low complexity; it reads PTNTSLTSTSP. Composition is skewed to polar residues over residues 791–801 and 811–837; these read PSQTQNSTQPT and DAQQ…LTES. Residues 833-861 adopt a coiled-coil conformation; it reads QLTESVSEEEQKKAETLNNEADINEDANT.

Belongs to the PPP1R37 family.

Its function is as follows. May inhibit phosphatase activity of protein phosphatase 1 (PP1) complexes. The protein is Protein phosphatase 1 regulatory subunit 37 (ppp1r37) of Danio rerio (Zebrafish).